We begin with the raw amino-acid sequence, 1585 residues long: Sterol 3-beta-glucosyltransferase (1585 aa).

Over residues 1–18 (MSPPISPTPPPLQPPFPP) the composition is skewed to pro residues. Disordered stretches follow at residues 1 to 154 (MSPP…CDFR), 177 to 225 (PWEE…PTHT), and 249 to 279 (YQYA…LPKG). Polar residues-rich tracts occupy residues 65–77 (DQAT…SLIP), 105–123 (DAQT…STHE), and 132–148 (PRTS…QMAE). Acidic residues predominate over residues 178–194 (WEEDDDSDDGEDDDEFI). A compositionally biased stretch (low complexity) spans 255-273 (ETSSRRTSAAGSESSSEGE). Residues 387 to 555 (ERLMEVFGLE…EAIVDVEKSP (169 aa)) enclose the GRAM 1 domain. One can recognise a PH domain in the interval 438–530 (LLVKSGPLHK…WVKAIQKVMF (93 aa)). 2 disordered regions span residues 625 to 645 (TSHA…LGMA) and 666 to 852 (DGEP…GSES). Basic and acidic residues predominate over residues 670-689 (LEEHSQGPHHNDEDASHLPH). Composition is skewed to polar residues over residues 760 to 785 (TDSS…QASV), 806 to 817 (NKPSVVDSNSAE), and 827 to 840 (SWTS…QMVK). Positions 862 to 933 (RKFRTFFALS…RDLYGLKAQK (72 aa)) constitute a GRAM 2 domain. The UDP-alpha-D-glucose site is built by Ser-1043, Arg-1044, Asp-1046, Ile-1358, His-1360, His-1373, Gly-1377, Thr-1378, Asp-1397, and Gln-1398. The interval 1499 to 1555 (NRVRSRSRSRSRSSQGRFSPRRHTVDDDGWSVVSGGSRSRSGSASAVTSPERRPLNI) is disordered. Over residues 1529 to 1545 (SVVSGGSRSRSGSASAV) the composition is skewed to low complexity.

It belongs to the glycosyltransferase 28 family.

The protein resides in the cytoplasm. It localises to the membrane. The catalysed reaction is a sterol + UDP-alpha-D-glucose = a sterol 3-beta-D-glucoside + UDP + H(+). The enzyme catalyses ergosterol + UDP-alpha-D-glucose = ergosteryl 3-beta-D-glucoside + UDP + H(+). Sterol glycosyltransferase responsible for the glycosylation of ergosterol to form ergosterol-glucoside. This is Sterol 3-beta-glucosyltransferase from Cryptococcus neoformans var. neoformans serotype D (strain JEC21 / ATCC MYA-565) (Filobasidiella neoformans).